We begin with the raw amino-acid sequence, 527 residues long: Serine/threonine-protein kinase CHK1 (527 aa).

The 267-residue stretch at 15–281 (VVLGDTVGQG…LKALKLHPWV (267 aa)) folds into the Protein kinase domain. ATP is bound by residues 21–29 (VGQGAFACV) and Lys-45. Asp-142 functions as the Proton acceptor in the catalytic mechanism.

It belongs to the protein kinase superfamily. CAMK Ser/Thr protein kinase family. NIM1 subfamily.

Its subcellular location is the nucleus. It carries out the reaction L-seryl-[protein] + ATP = O-phospho-L-seryl-[protein] + ADP + H(+). The enzyme catalyses L-threonyl-[protein] + ATP = O-phospho-L-threonyl-[protein] + ADP + H(+). Functionally, serine/threonine-protein kinase which is required for checkpoint-mediated cell cycle arrest and activation of DNA repair in response to the presence of DNA damage or unreplicated DNA. May also negatively regulate cell cycle progression during unperturbed cell cycles. Controls phosphorylation and abundance of PDS1 to prevent anaphase entry. Also helps prevent mitotic exit. This Saccharomyces cerevisiae (strain ATCC 204508 / S288c) (Baker's yeast) protein is Serine/threonine-protein kinase CHK1 (CHK1).